The primary structure comprises 929 residues: Thrombospondin-3b (929 aa).

A signal peptide spans 1-22 (MELRKIVPNLLVLYVAVHFSQS). One can recognise a Laminin G-like domain in the interval 24–192 (EIKVINVLEL…VESVKLALGG (169 aa)). An N-linked (GlcNAc...) asparagine glycan is attached at Asn45. Cystine bridges form between Cys277–Cys288, Cys282–Cys299, Cys319–Cys343, Cys349–Cys362, Cys356–Cys371, Cys374–Cys386, Cys392–Cys406, Cys400–Cys416, Cys418–Cys429, Cys445–Cys452, Cys457–Cys477, Cys493–Cys513, Cys516–Cys536, Cys552–Cys572, Cys575–Cys595, Cys613–Cys633, Cys653–Cys673, and Cys689–Cys910. Residues 345 to 384 (DIDECAELSGSCVPNSVCINTVGSFKCGQCKAGFVGNQTV) form the EGF-like 1; calcium-binding domain. Asn381 carries an N-linked (GlcNAc...) asparagine glycan. An EGF-like 2 domain is found at 388-430 (ARRTCETLGYSPCDVNSHCVMGRNSDVSCVCNVGWAGNGNICG). 8 TSP type-3 repeats span residues 431–465 (PDSD…NSGQ), 466–501 (EDTD…NKDQ), 502–524 (QNSD…NGDQ), 525–560 (LDTD…NPMQ), 561–583 (TDRD…DPLQ), 584–621 (SDMD…NSSQ), 622–661 (LDSD…NPSQ), and 662–697 (IDTD…EVTM). The span at 602–613 (DGDGYQDTRDNC) shows a compositional bias: basic and acidic residues. Positions 602–651 (DGDGYQDTRDNCPEVPNSSQLDSDNDGIGDECDDDDDNDGIPDILPPGPD) are disordered. A glycan (N-linked (GlcNAc...) asparagine) is linked at Asn618. Over residues 624–641 (SDNDGIGDECDDDDDNDG) the composition is skewed to acidic residues. A TSP C-terminal domain is found at 701–915 (RAFQTVILDP…LGYRCNDSIP (215 aa)). Asn911 carries an N-linked (GlcNAc...) asparagine glycan.

This sequence belongs to the thrombospondin family. As to quaternary structure, oligomer; disulfide-linked.

Functionally, adhesive glycoprotein that mediates cell-to-cell and cell-to-matrix interactions. Can bind to fibrinogen, fibronectin, laminin and type V collagen. The polypeptide is Thrombospondin-3b (Danio rerio (Zebrafish)).